A 128-amino-acid chain; its full sequence is MRHRKCGRKLNRNSSHLHAMLRNMAASLIINEVIKTTLPKAKELPRVVEPLITLAKHDNIANRRLVFAKIRSNEIVSKLFRELGPRFLNRTGGYTRILKCGFRAGDNAPMAYIEFVDRISANNSKDIN.

It belongs to the bacterial ribosomal protein bL17 family. In terms of assembly, part of the 50S ribosomal subunit. Contacts protein L32.

This Baumannia cicadellinicola subsp. Homalodisca coagulata protein is Large ribosomal subunit protein bL17.